Reading from the N-terminus, the 119-residue chain is Circadian clock oscillator protein KaiB (119 aa).

It belongs to the KaiB family. In terms of assembly, may undergo a major conformational rearrangment; in the free state forms homooligomers. When bound to KaiC switches to a monomeric thioredoxin-fold (KaiB(fs)). The active oscillator complex is probably KaiC(6):KaiB(6).

Functionally, component of the KaiBC clock protein complex, which constitutes the main circadian regulator in cyanobacteria; it may modify the ATPase activity of KaiC. May be a metamorphic protein which reversibly switches between an inactive tetrameric fold and a rare, thioredoxin-like monomeric fold (KaiB(fs)). KaiB(fs) binds phospho-KaiC, and perhaps clock output effectors. The chain is Circadian clock oscillator protein KaiB from Prochlorococcus marinus (strain MIT 9303).